Consider the following 328-residue polypeptide: Type II secretion system protein K (328 aa).

A propeptide spans 1 to 7 (MRSRQRG) (leader sequence). A helical transmembrane segment spans residues 8 to 28 (AALLVVLLILALMVTIAAVIT). Residues 29-328 (ERTGKAFLRT…QYGGYRTVNP (300 aa)) are Periplasmic-facing.

This sequence belongs to the GSP K family. Type II secretion is composed of four main components: the outer membrane complex, the inner membrane complex, the cytoplasmic secretion ATPase and the periplasm-spanning pseudopilus. Interacts with core component OutG. In terms of processing, cleaved by prepilin peptidase.

Its subcellular location is the cell inner membrane. Its function is as follows. Component of the type II secretion system required for the energy-dependent secretion of extracellular factors such as proteases and toxins from the periplasm. Plays a role in pseudopilus assembly and seems to control its length. Interacts with the pseudopilus tip complex that is critical for the recognition and binding of secretion substrates. This is Type II secretion system protein K (outK) from Pectobacterium carotovorum subsp. carotovorum (Erwinia carotovora subsp. carotovora).